The following is a 437-amino-acid chain: Adenosylmethionine-8-amino-7-oxononanoate aminotransferase (437 aa).

Trp-64 contacts substrate. Pyridoxal 5'-phosphate is bound at residue 124–125; sequence GS. Substrate is bound at residue Tyr-157. Asp-254 provides a ligand contact to pyridoxal 5'-phosphate. 2 residues coordinate substrate: Lys-283 and Gly-316. Residue Lys-283 is modified to N6-(pyridoxal phosphate)lysine. 317-318 provides a ligand contact to pyridoxal 5'-phosphate; it reads PT. Residue Arg-400 coordinates substrate.

This sequence belongs to the class-III pyridoxal-phosphate-dependent aminotransferase family. BioA subfamily. Homodimer. It depends on pyridoxal 5'-phosphate as a cofactor.

The protein resides in the cytoplasm. The catalysed reaction is (8S)-8-amino-7-oxononanoate + S-adenosyl-L-methionine = S-adenosyl-4-methylsulfanyl-2-oxobutanoate + (7R,8S)-7,8-diammoniononanoate. It functions in the pathway cofactor biosynthesis; biotin biosynthesis; 7,8-diaminononanoate from 8-amino-7-oxononanoate (SAM route): step 1/1. Functionally, catalyzes the transfer of the alpha-amino group from S-adenosyl-L-methionine (SAM) to 7-keto-8-aminopelargonic acid (KAPA) to form 7,8-diaminopelargonic acid (DAPA). It is the only aminotransferase known to utilize SAM as an amino donor. This chain is Adenosylmethionine-8-amino-7-oxononanoate aminotransferase (bioA), found in Mycobacterium tuberculosis (strain CDC 1551 / Oshkosh).